The sequence spans 681 residues: T-box brain protein 1 (681 aa).

2 disordered regions span residues 43-83 (TDNL…RSKL) and 108-127 (SQSS…FPYP). A compositionally biased stretch (polar residues) spans 58-68 (GMTNQSDTDNF). Positions 108-122 (SQSSQPQSAATAPSA) are enriched in low complexity. Positions 213-393 (LWLKFHRHQT…HNPFAKGFRD (181 aa)) form a DNA-binding region, T-box. Phosphothreonine is present on Thr-408. Ser-410 bears the Phosphoserine mark. The interval 447-483 (PGAGAGPGPGTDRSVPHTNGLLSPQQAEDPGAPSPQR) is disordered. Polar residues predominate over residues 462-472 (PHTNGLLSPQQ). Phosphoserine is present on Ser-594. The disordered stretch occupies residues 597 to 655 (APAAEDAKPKDLSDSSWIETPSSIKSIDSSDSGIYEQAKRRRISPADTPVSESSSPLKS). Residues 618 to 628 (SSIKSIDSSDS) show a composition bias toward low complexity. Ser-640 is modified (phosphoserine).

As to quaternary structure, homodimer. Part of a complex containing CASK, TBR1 and TSPYL2; may modulate gene expression in response to neuronal synaptic activity. Forms homodimers. Interacts with FOXP2. Interacts with FOXP1. Interacts with BCL11A. In terms of tissue distribution, expressed in the developing and adult cortex. Expressed in the olfactory bulbs.

The protein resides in the nucleus. Transcriptional repressor involved in multiple aspects of cortical development, including neuronal migration, laminar and areal identity, and axonal projection. As transcriptional repressor of FEZF2, it blocks the formation of the corticospinal (CS) tract from layer 6 projection neurons, thereby restricting the origin of CS axons specifically to layer 5 neurons. The polypeptide is T-box brain protein 1 (Tbr1) (Mus musculus (Mouse)).